The chain runs to 436 residues: Xylose isomerase (436 aa).

Residues H100 and D103 contribute to the active site. Residues E231, E267, H270, D295, D306, D308, and D338 each contribute to the Mg(2+) site.

This sequence belongs to the xylose isomerase family. In terms of assembly, homotetramer. The cofactor is Mg(2+).

Its subcellular location is the cytoplasm. It carries out the reaction alpha-D-xylose = alpha-D-xylulofuranose. This is Xylose isomerase from Rhizobium etli (strain CIAT 652).